A 687-amino-acid polypeptide reads, in one-letter code: DNA ligase (687 aa).

Residues Asp-34–Asp-38, Ser-83–Leu-84, and Glu-117 each bind NAD(+). The active-site N6-AMP-lysine intermediate is Lys-119. NAD(+) is bound by residues Arg-140, Glu-182, Lys-298, and Lys-322. 4 residues coordinate Zn(2+): Cys-416, Cys-419, Cys-434, and Cys-439. The region spanning Glu-609–Glu-687 is the BRCT domain.

Belongs to the NAD-dependent DNA ligase family. LigA subfamily. The cofactor is Mg(2+). Mn(2+) serves as cofactor.

The enzyme catalyses NAD(+) + (deoxyribonucleotide)n-3'-hydroxyl + 5'-phospho-(deoxyribonucleotide)m = (deoxyribonucleotide)n+m + AMP + beta-nicotinamide D-nucleotide.. Its function is as follows. DNA ligase that catalyzes the formation of phosphodiester linkages between 5'-phosphoryl and 3'-hydroxyl groups in double-stranded DNA using NAD as a coenzyme and as the energy source for the reaction. It is essential for DNA replication and repair of damaged DNA. The sequence is that of DNA ligase from Anaeromyxobacter dehalogenans (strain 2CP-1 / ATCC BAA-258).